Reading from the N-terminus, the 409-residue chain is 1-deoxy-D-xylulose 5-phosphate reductoisomerase (409 aa).

Residues threonine 5, glycine 6, serine 7, isoleucine 8, glycine 31, asparagine 33, and asparagine 122 each coordinate NADPH. Position 123 (lysine 123) interacts with 1-deoxy-D-xylulose 5-phosphate. Glutamate 124 contributes to the NADPH binding site. Aspartate 148 serves as a coordination point for Mn(2+). 1-deoxy-D-xylulose 5-phosphate-binding residues include serine 149, glutamate 150, serine 186, and histidine 209. A Mn(2+)-binding site is contributed by glutamate 150. Glycine 215 serves as a coordination point for NADPH. Serine 222, asparagine 227, lysine 228, and glutamate 231 together coordinate 1-deoxy-D-xylulose 5-phosphate. Glutamate 231 lines the Mn(2+) pocket.

The protein belongs to the DXR family. The cofactor is Mg(2+). Mn(2+) serves as cofactor.

It carries out the reaction 2-C-methyl-D-erythritol 4-phosphate + NADP(+) = 1-deoxy-D-xylulose 5-phosphate + NADPH + H(+). It participates in isoprenoid biosynthesis; isopentenyl diphosphate biosynthesis via DXP pathway; isopentenyl diphosphate from 1-deoxy-D-xylulose 5-phosphate: step 1/6. Catalyzes the NADPH-dependent rearrangement and reduction of 1-deoxy-D-xylulose-5-phosphate (DXP) to 2-C-methyl-D-erythritol 4-phosphate (MEP). The protein is 1-deoxy-D-xylulose 5-phosphate reductoisomerase of Parasynechococcus marenigrum (strain WH8102).